Here is a 248-residue protein sequence, read N- to C-terminus: Glutamine-binding periplasmic protein (248 aa).

The first 22 residues, 1-22, serve as a signal peptide directing secretion; the sequence is MKSVLKVSLAALTLAFAVSSHA.

This sequence belongs to the bacterial solute-binding protein 3 family.

The protein resides in the periplasm. Involved in a glutamine-transport system GlnHPQ. The polypeptide is Glutamine-binding periplasmic protein (glnH) (Escherichia coli O157:H7).